Here is a 392-residue protein sequence, read N- to C-terminus: Anhydro-N-acetylmuramic acid kinase (392 aa).

19–26 contributes to the ATP binding site; that stretch reads GTSVDGID.

It belongs to the anhydro-N-acetylmuramic acid kinase family.

The enzyme catalyses 1,6-anhydro-N-acetyl-beta-muramate + ATP + H2O = N-acetyl-D-muramate 6-phosphate + ADP + H(+). The protein operates within amino-sugar metabolism; 1,6-anhydro-N-acetylmuramate degradation. It participates in cell wall biogenesis; peptidoglycan recycling. Catalyzes the specific phosphorylation of 1,6-anhydro-N-acetylmuramic acid (anhMurNAc) with the simultaneous cleavage of the 1,6-anhydro ring, generating MurNAc-6-P. Is required for the utilization of anhMurNAc either imported from the medium or derived from its own cell wall murein, and thus plays a role in cell wall recycling. This Trichormus variabilis (strain ATCC 29413 / PCC 7937) (Anabaena variabilis) protein is Anhydro-N-acetylmuramic acid kinase.